Reading from the N-terminus, the 323-residue chain is 4-hydroxy-3-methylbut-2-enyl diphosphate reductase (323 aa).

Cys-12 contributes to the [4Fe-4S] cluster binding site. Residues His-43 and His-81 each contribute to the (2E)-4-hydroxy-3-methylbut-2-enyl diphosphate site. 2 residues coordinate dimethylallyl diphosphate: His-43 and His-81. Isopentenyl diphosphate-binding residues include His-43 and His-81. Cys-103 contributes to the [4Fe-4S] cluster binding site. Residue His-131 coordinates (2E)-4-hydroxy-3-methylbut-2-enyl diphosphate. Residue His-131 coordinates dimethylallyl diphosphate. Isopentenyl diphosphate is bound at residue His-131. The active-site Proton donor is Glu-133. Thr-170 serves as a coordination point for (2E)-4-hydroxy-3-methylbut-2-enyl diphosphate. Cys-198 lines the [4Fe-4S] cluster pocket. Residues Ser-226, Asn-228, and Ser-271 each contribute to the (2E)-4-hydroxy-3-methylbut-2-enyl diphosphate site. Dimethylallyl diphosphate is bound by residues Ser-226, Asn-228, and Ser-271. Residues Ser-226, Asn-228, and Ser-271 each contribute to the isopentenyl diphosphate site.

Belongs to the IspH family. The cofactor is [4Fe-4S] cluster.

It catalyses the reaction isopentenyl diphosphate + 2 oxidized [2Fe-2S]-[ferredoxin] + H2O = (2E)-4-hydroxy-3-methylbut-2-enyl diphosphate + 2 reduced [2Fe-2S]-[ferredoxin] + 2 H(+). The catalysed reaction is dimethylallyl diphosphate + 2 oxidized [2Fe-2S]-[ferredoxin] + H2O = (2E)-4-hydroxy-3-methylbut-2-enyl diphosphate + 2 reduced [2Fe-2S]-[ferredoxin] + 2 H(+). It functions in the pathway isoprenoid biosynthesis; dimethylallyl diphosphate biosynthesis; dimethylallyl diphosphate from (2E)-4-hydroxy-3-methylbutenyl diphosphate: step 1/1. It participates in isoprenoid biosynthesis; isopentenyl diphosphate biosynthesis via DXP pathway; isopentenyl diphosphate from 1-deoxy-D-xylulose 5-phosphate: step 6/6. Its function is as follows. Catalyzes the conversion of 1-hydroxy-2-methyl-2-(E)-butenyl 4-diphosphate (HMBPP) into a mixture of isopentenyl diphosphate (IPP) and dimethylallyl diphosphate (DMAPP). Acts in the terminal step of the DOXP/MEP pathway for isoprenoid precursor biosynthesis. This is 4-hydroxy-3-methylbut-2-enyl diphosphate reductase from Lysinibacillus sphaericus (strain C3-41).